A 547-amino-acid polypeptide reads, in one-letter code: Collagen EMF1-alpha (547 aa).

2 disordered regions span residues 1 to 99 (GVPG…APGV) and 116 to 311 (GPDG…GGGI). Residues 1–280 (GVPGPNGDVG…QGPRGGQGPK (280 aa)) form a triple-helical region region. Low complexity-rich tracts occupy residues 27 to 69 (QGPD…IRGQ) and 160 to 175 (QGSK…VGPQ). Residue K187 is modified to Allysine. Positions 219-228 (VKGEKGEVGD) are enriched in basic and acidic residues. Over residues 246–271 (DAGPAGPIGDAGIQGPPGQDGPTGAQ) the composition is skewed to low complexity. Over residues 272–281 (GPRGGQGPKG) the composition is skewed to gly residues. A telopeptide region spans residues 308-336 (GGGIILVPVNDQNPTRSPVSGSVFYRGQA). Residues 337–547 (EETDVNLGSV…GFEMGPACFY (211 aa)) constitute a propeptide, C-terminal propeptide. Residues 343-547 (LGSVADVIEL…GFEMGPACFY (205 aa)) enclose the Fibrillar collagen NC1 domain. 2 N-linked (GlcNAc...) asparagine glycosylation sites follow: N381 and N406.

This sequence belongs to the fibrillar collagen family.

The protein resides in the secreted. The protein localises to the extracellular space. Its subcellular location is the extracellular matrix. The protein is Collagen EMF1-alpha (COLF1) of Ephydatia muelleri (Mueller's freshwater sponge).